A 290-amino-acid polypeptide reads, in one-letter code: Shikimate dehydrogenase (NADP(+)) (290 aa).

Residues 19–21 and Ser-65 contribute to the shikimate site; that span reads SLS. The Proton acceptor role is filled by Lys-69. 2 residues coordinate shikimate: Asn-90 and Asp-105. NADP(+)-binding positions include 129-133 and Leu-231; that span reads GAGGA. Tyr-233 lines the shikimate pocket. NADP(+) is bound at residue Gly-254.

It belongs to the shikimate dehydrogenase family. Homodimer.

It catalyses the reaction shikimate + NADP(+) = 3-dehydroshikimate + NADPH + H(+). It functions in the pathway metabolic intermediate biosynthesis; chorismate biosynthesis; chorismate from D-erythrose 4-phosphate and phosphoenolpyruvate: step 4/7. Involved in the biosynthesis of the chorismate, which leads to the biosynthesis of aromatic amino acids. Catalyzes the reversible NADPH linked reduction of 3-dehydroshikimate (DHSA) to yield shikimate (SA). The chain is Shikimate dehydrogenase (NADP(+)) from Latilactobacillus sakei subsp. sakei (strain 23K) (Lactobacillus sakei subsp. sakei).